Here is a 480-residue protein sequence, read N- to C-terminus: Sialyltransferase-like protein 5 (480 aa).

Residues 1–17 (MARAPPPLSSLPPPPRR) lie on the Cytoplasmic side of the membrane. The signal-anchor for type II membrane protein transmembrane segment at 18 to 38 (PTVVLLLGLALAFCLAVLSIQ) threads the bilayer. Residues 39–480 (SSFFTAPRLA…VCVRHERSSS (442 aa)) lie on the Lumenal side of the membrane. N-linked (GlcNAc...) asparagine glycosylation is found at N98, N130, N165, and N321.

It belongs to the glycosyltransferase 29 family.

Its subcellular location is the golgi apparatus membrane. In terms of biological role, may possess sialyltransferase-like activity in vitro. This is Sialyltransferase-like protein 5 from Oryza sativa subsp. japonica (Rice).